The chain runs to 237 residues: D-aminoacyl-tRNA deacylase (237 aa).

The protein belongs to the DtdA deacylase family. As to quaternary structure, monomer. Zn(2+) is required as a cofactor.

The catalysed reaction is a D-aminoacyl-tRNA + H2O = a tRNA + a D-alpha-amino acid + H(+). The enzyme catalyses glycyl-tRNA(Ala) + H2O = tRNA(Ala) + glycine + H(+). Its function is as follows. D-aminoacyl-tRNA deacylase with broad substrate specificity. By recycling D-aminoacyl-tRNA to D-amino acids and free tRNA molecules, this enzyme counteracts the toxicity associated with the formation of D-aminoacyl-tRNA entities in vivo. The chain is D-aminoacyl-tRNA deacylase from Saccharolobus islandicus (strain Y.N.15.51 / Yellowstone #2) (Sulfolobus islandicus).